Here is a 426-residue protein sequence, read N- to C-terminus: MIQERADIEKAYASNLRKFAARLEMFLRTGVEYGTATNILSGLAKEAEDNAELHSNIAAGLINPVQLGIKNWQRENFHKSSISTSIKEVKNFDSEFENAQKTWYKHYKNVNRCKKEYFHACKTVRSLQVQVQNAKNEPFGTPEQLRKIEDKLRKGIMEEEKTRKAYEEALSSLSDVTPRYIEDMTQVFNKAQAFERERIIYFKEQALQMQEVLDISAKPNLSQIFVGLRETVAKVDADADLKKWSLAYGVDMAPNFPVFQEYSPEMSALGKKGRSALADGSSGGVTLTSLKTITSPDRGGPIPGTTDSGSNISTSPVHTTAYGSNSYDHGSEGATPSDYTSSVNGAAAAISKEKQRVEDTPPYPDFVDDGRPGVPIRALYDYVGVEADELSFNSGDLFEKLEDEDEQGWCKGRKDGRVGLYPRQLR.

Residues 1-240 (MIQERADIEK…TVAKVDADAD (240 aa)) enclose the F-BAR domain. 2 disordered regions span residues 287-315 (LTSL…ISTS) and 350-369 (ISKE…FVDD). The segment covering 305–315 (TTDSGSNISTS) has biased composition (polar residues). The SH3 domain occupies 371 to 426 (RPGVPIRALYDYVGVEADELSFNSGDLFEKLEDEDEQGWCKGRKDGRVGLYPRQLR).

The protein is Antigen EM13 (EM13) of Echinococcus multilocularis (Fox tapeworm).